A 297-amino-acid chain; its full sequence is Signal-transducing adaptor protein 1 (297 aa).

The PH domain occupies 25 to 121 (PLYFEGFLLV…WRGFILTVTE (97 aa)). Phosphotyrosine is present on tyrosine 170. Residues 179 to 273 (ECFYAVSRKE…GNLRPFIHSA (95 aa)) enclose the SH2 domain. The segment at 271–297 (HSADDNFGQDPNIEDRSEKFKKNPHNA) is disordered.

In terms of assembly, interacts with URI1; the interaction is phosphorylation-dependent occurs in a growth-dependent manner. Interacts with KIT and CSF1R. Post-translationally, phosphorylated on tyrosine by TEC. Phosphorylated on tyrosine by KIT. As to expression, expression restricted to the bone marrow.

It localises to the nucleus. The protein localises to the cytoplasm. It is found in the mitochondrion. Its function is as follows. May function as an adapter molecule downstream of KIT in the proliferation or differentiation of hematopoietic stem cells. This chain is Signal-transducing adaptor protein 1 (Stap1), found in Mus musculus (Mouse).